A 196-amino-acid chain; its full sequence is Transcriptional regulatory protein UhpA (196 aa).

The Response regulatory domain occupies 3 to 116; that stretch reads TVALIDDHLI…ELIAAVHTVA (114 aa). D54 carries the 4-aspartylphosphate modification. The 66-residue stretch at 131-196 folds into the HTH luxR-type domain; the sequence is ASGRQDPLTK…ELARRMFDGW (66 aa). Positions 155–174 form a DNA-binding region, H-T-H motif; the sequence is VKEIAAELGLSPKTVHVHRA.

Phosphorylated and dephosphorylated by UhpB.

The protein resides in the cytoplasm. Its activity is regulated as follows. Phosphorylation by UhpB enhances DNA binding activity. Functionally, part of the UhpABC signaling cascade that controls the expression of the hexose phosphate transporter UhpT. Activates the transcription of the uhpT gene. Acts by binding specifically to the uhpT promoter region. The protein is Transcriptional regulatory protein UhpA (uhpA) of Escherichia coli (strain K12).